The chain runs to 207 residues: Small ribosomal subunit protein uS3c (207 aa).

The KH type-2 domain maps to 39 to 109 (IRDYIFTNLL…QLKINIIDVT (71 aa)).

The protein belongs to the universal ribosomal protein uS3 family. In terms of assembly, part of the 30S ribosomal subunit.

The protein resides in the plastid. Its subcellular location is the chloroplast. This is Small ribosomal subunit protein uS3c (rps3) from Cyanidium caldarium (Red alga).